The primary structure comprises 188 residues: Elongation factor P (188 aa).

It belongs to the elongation factor P family.

It is found in the cytoplasm. It participates in protein biosynthesis; polypeptide chain elongation. Its function is as follows. Involved in peptide bond synthesis. Stimulates efficient translation and peptide-bond synthesis on native or reconstituted 70S ribosomes in vitro. Probably functions indirectly by altering the affinity of the ribosome for aminoacyl-tRNA, thus increasing their reactivity as acceptors for peptidyl transferase. This Cereibacter sphaeroides (strain KD131 / KCTC 12085) (Rhodobacter sphaeroides) protein is Elongation factor P.